The primary structure comprises 191 residues: Shikimate kinase (191 aa).

24-29 is an ATP binding site; the sequence is GSGKTS. Position 28 (threonine 28) interacts with Mg(2+). The substrate site is built by aspartate 46, arginine 70, and glycine 92. Arginine 130 serves as a coordination point for ATP. Substrate is bound at residue arginine 149.

This sequence belongs to the shikimate kinase family. As to quaternary structure, monomer. Requires Mg(2+) as cofactor.

The protein resides in the cytoplasm. The catalysed reaction is shikimate + ATP = 3-phosphoshikimate + ADP + H(+). Its pathway is metabolic intermediate biosynthesis; chorismate biosynthesis; chorismate from D-erythrose 4-phosphate and phosphoenolpyruvate: step 5/7. Functionally, catalyzes the specific phosphorylation of the 3-hydroxyl group of shikimic acid using ATP as a cosubstrate. In Parasynechococcus marenigrum (strain WH8102), this protein is Shikimate kinase.